The sequence spans 324 residues: Beta-ketoacyl-[acyl-carrier-protein] synthase III (324 aa).

Active-site residues include C112 and H250. The tract at residues 251-255 (QANIR) is ACP-binding. The active site involves N280.

This sequence belongs to the thiolase-like superfamily. FabH family. In terms of assembly, homodimer.

The protein resides in the cytoplasm. It carries out the reaction malonyl-[ACP] + acetyl-CoA + H(+) = 3-oxobutanoyl-[ACP] + CO2 + CoA. The protein operates within lipid metabolism; fatty acid biosynthesis. In terms of biological role, catalyzes the condensation reaction of fatty acid synthesis by the addition to an acyl acceptor of two carbons from malonyl-ACP. Catalyzes the first condensation reaction which initiates fatty acid synthesis and may therefore play a role in governing the total rate of fatty acid production. Possesses both acetoacetyl-ACP synthase and acetyl transacylase activities. Its substrate specificity determines the biosynthesis of branched-chain and/or straight-chain of fatty acids. This Clostridium novyi (strain NT) protein is Beta-ketoacyl-[acyl-carrier-protein] synthase III.